A 315-amino-acid polypeptide reads, in one-letter code: Acetyl-coenzyme A carboxylase carboxyl transferase subunit beta, chloroplastic (315 aa).

Positions 47–315 constitute a CoA carboxyltransferase N-terminal domain; the sequence is LWTRCDSCEN…VYKESNSYLF (269 aa). Zn(2+)-binding residues include Cys-51, Cys-54, Cys-70, and Cys-73. A C4-type zinc finger spans residues 51-73; sequence CDSCENMLYVRFLKQNKRICEEC.

This sequence belongs to the AccD/PCCB family. In terms of assembly, acetyl-CoA carboxylase is a heterohexamer composed of biotin carboxyl carrier protein, biotin carboxylase and 2 subunits each of ACCase subunit alpha and ACCase plastid-coded subunit beta (accD). Requires Zn(2+) as cofactor.

The protein localises to the plastid. It is found in the chloroplast stroma. It catalyses the reaction N(6)-carboxybiotinyl-L-lysyl-[protein] + acetyl-CoA = N(6)-biotinyl-L-lysyl-[protein] + malonyl-CoA. It participates in lipid metabolism; malonyl-CoA biosynthesis; malonyl-CoA from acetyl-CoA: step 1/1. Functionally, component of the acetyl coenzyme A carboxylase (ACC) complex. Biotin carboxylase (BC) catalyzes the carboxylation of biotin on its carrier protein (BCCP) and then the CO(2) group is transferred by the transcarboxylase to acetyl-CoA to form malonyl-CoA. The polypeptide is Acetyl-coenzyme A carboxylase carboxyl transferase subunit beta, chloroplastic (Physcomitrium patens (Spreading-leaved earth moss)).